The chain runs to 147 residues: Austinoid biosynthesis cluster protein H (147 aa).

The protein belongs to the trt14 isomerase family. Homodimer.

It functions in the pathway secondary metabolite biosynthesis; terpenoid biosynthesis. Its function is as follows. Part of the gene cluster that mediates the biosynthesis of calidodehydroaustin, a fungal meroterpenoid. The first step of the pathway is the synthesis of 3,5-dimethylorsellinic acid by the polyketide synthase ausA. 3,5-dimethylorsellinic acid is then prenylated by the polyprenyl transferase ausN. Further epoxidation by the FAD-dependent monooxygenase ausM and cyclization by the probable terpene cyclase ausL lead to the formation of protoaustinoid A. Protoaustinoid A is then oxidized to spiro-lactone preaustinoid A3 by the combined action of the FAD-binding monooxygenases ausB and ausC, and the dioxygenase ausE. Acid-catalyzed keto-rearrangement and ring contraction of the tetraketide portion of preaustinoid A3 by ausJ lead to the formation of preaustinoid A4. The aldo-keto reductase ausK, with the help of ausH, is involved in the next step by transforming preaustinoid A4 into isoaustinone which is in turn hydroxylated by the P450 monooxygenase ausI to form austinolide. The cytochrome P450 monooxygenase ausG modifies austinolide to austinol. Austinol is further acetylated to austin by the O-acetyltransferase ausP, which spontaneously changes to dehydroaustin. The cytochrome P450 monooxygenase ausR then converts dehydroaustin is into 7-dehydrodehydroaustin. The hydroxylation catalyzed by ausR permits the O-acetyltransferase ausQ to add an additional acetyl group to the molecule, leading to the formation of acetoxydehydroaustin. The short chain dehydrogenase ausT catalyzes the reduction of the double bond present between carbon atoms 1 and 2 to convert 7-dehydrodehydroaustin into 1,2-dihydro-7-hydroxydehydroaustin. AusQ catalyzes not only an acetylation reaction but also the addition of the PKS ausV diketide product to 1,2-dihydro-7-hydroxydehydroaustin, forming precalidodehydroaustin. Finally, the iron/alpha-ketoglutarate-dependent dioxygenase converts precalidodehydroaustin into calidodehydroaustin. The polypeptide is Austinoid biosynthesis cluster protein H (Aspergillus calidoustus).